Consider the following 52-residue polypeptide: ATP synthase F(0) complex subunit 8 (52 aa).

The chain crosses the membrane as a helical span at residues 10–30 (LMTHLWAWLMLYLTTQKIKTF).

It belongs to the ATPase protein 8 family. Component of the ATP synthase complex composed at least of ATP5F1A/subunit alpha, ATP5F1B/subunit beta, ATP5MC1/subunit c (homooctomer), MT-ATP6/subunit a, MT-ATP8/subunit 8, ATP5ME/subunit e, ATP5MF/subunit f, ATP5MG/subunit g, ATP5MK/subunit k, ATP5MJ/subunit j, ATP5F1C/subunit gamma, ATP5F1D/subunit delta, ATP5F1E/subunit epsilon, ATP5PF/subunit F6, ATP5PB/subunit b, ATP5PD/subunit d, ATP5PO/subunit OSCP. ATP synthase complex consists of a soluble F(1) head domain (subunits alpha(3) and beta(3)) - the catalytic core - and a membrane F(0) domain - the membrane proton channel (subunits c, a, 8, e, f, g, k and j). These two domains are linked by a central stalk (subunits gamma, delta, and epsilon) rotating inside the F1 region and a stationary peripheral stalk (subunits F6, b, d, and OSCP).

It is found in the mitochondrion membrane. Subunit 8, of the mitochondrial membrane ATP synthase complex (F(1)F(0) ATP synthase or Complex V) that produces ATP from ADP in the presence of a proton gradient across the membrane which is generated by electron transport complexes of the respiratory chain. ATP synthase complex consist of a soluble F(1) head domain - the catalytic core - and a membrane F(1) domain - the membrane proton channel. These two domains are linked by a central stalk rotating inside the F(1) region and a stationary peripheral stalk. During catalysis, ATP synthesis in the catalytic domain of F(1) is coupled via a rotary mechanism of the central stalk subunits to proton translocation. In vivo, can only synthesize ATP although its ATP hydrolase activity can be activated artificially in vitro. Part of the complex F(0) domain. This is ATP synthase F(0) complex subunit 8 from Lycodon semicarinatus (Ryukyu odd-tooth snake).